A 1141-amino-acid chain; its full sequence is Myosin-binding protein C, slow-type (1141 aa).

Residues 1–10 are compositionally biased toward basic and acidic residues; the sequence is MPEPTKKEEN. Positions 1 to 51 are disordered; sequence MPEPTKKEENEVPAPAPPPEEPSKEKEAGTTPAKDWTLVETPPGEEQAKQN. 5 Ig-like C2-type domains span residues 72–144, 251–340, 341–431, 432–520, and 522–619; these read GEDI…RCEV, SAAF…VREP, PIMV…VDLK, PLKI…HVID, and PKII…VVDF. The residue at position 406 (threonine 406) is a Phosphothreonine. Serine 611 carries the phosphoserine modification. Fibronectin type-III domains lie at 622–721 and 722–833; these read PPVA…TSPP and TLLT…VKEI. Position 798 is a phosphothreonine (threonine 798). Tyrosine 823 bears the Phosphotyrosine mark. The Ig-like C2-type 6 domain maps to 837-931; it reads PKIRIPRHLK…ASIDIQIIDR (95 aa). The Fibronectin type-III 3 domain maps to 934 to 1029; sequence PPQIVKIEDV…TKESAVIARD (96 aa). Positions 1047–1141 constitute an Ig-like C2-type 7 domain; it reads PMFTQPLVNT…CKLEVKVIAQ (95 aa).

Belongs to the immunoglobulin superfamily. MyBP family. As to quaternary structure, interacts with USP25 (isoform USP25m only); the interaction prevents proteasomal degradation of MYBPC1.

In terms of biological role, thick filament-associated protein located in the crossbridge region of vertebrate striated muscle a bands. Slow skeletal protein that binds to both myosin and actin. In vitro, binds to native thin filaments and modifies the activity of actin-activated myosin ATPase. May modulate muscle contraction or may play a more structural role. In Homo sapiens (Human), this protein is Myosin-binding protein C, slow-type (MYBPC1).